Reading from the N-terminus, the 208-residue chain is Porimin (208 aa).

A signal peptide spans 1-26 (MGLGARGAWAALLLGTLQVLALLGAA). The Extracellular segment spans residues 27–166 (HESAAMAASA…EAKKGSKFDT (140 aa)). Polar residues predominate over residues 42–57 (GLPHNSSANSTETLQH). Positions 42 to 125 (GLPHNSSANS…PKTTSVSQNT (84 aa)) are disordered. 7 N-linked (GlcNAc...) asparagine glycosylation sites follow: asparagine 46, asparagine 50, asparagine 64, asparagine 68, asparagine 83, asparagine 96, and asparagine 106. The span at 65-107 (ETSNSTVKPPTSVASDSSNTTVTTMKPTAASNTTTPGMVSTNM) shows a compositional bias: polar residues. Low complexity predominate over residues 108–122 (TSTTLKSTPKTTSVS). Residues asparagine 124 and asparagine 138 are each glycosylated (N-linked (GlcNAc...) asparagine). The helical transmembrane segment at 167-187 (GSFVGGIVLTLGVLSILYIGC) threads the bilayer. The Cytoplasmic portion of the chain corresponds to 188–208 (KMYYSRRGIRYRTIDEHDAII).

The protein belongs to the CD164 family. In terms of tissue distribution, ubiquitous. Not expressed in ovary. Expressed in keratinocytes.

It localises to the membrane. Its function is as follows. Implicated in oncotic cell death, characterized by cell swelling, organelle swelling, vacuolization and increased membrane permeability. The protein is Porimin (TMEM123) of Homo sapiens (Human).